An 88-amino-acid polypeptide reads, in one-letter code: Large ribosomal subunit protein bL27 (88 aa).

Residues 1 to 22 (MAHKKGASSSRNGRDSNAQRLG) form a disordered region. Polar residues predominate over residues 7 to 19 (ASSSRNGRDSNAQ).

The protein belongs to the bacterial ribosomal protein bL27 family.

The sequence is that of Large ribosomal subunit protein bL27 from Mycolicibacterium gilvum (strain PYR-GCK) (Mycobacterium gilvum (strain PYR-GCK)).